Reading from the N-terminus, the 107-residue chain is MVAPKIRIKLRGFDHKALDQSASKIVDTVRRTGADVSGPVPLPTRIRRFTVLRSPFKYKDSREHFEIRTHNRLVDIMNPTKKTIDSLMTLDLPTGVDIEIKTVGGRA.

This sequence belongs to the universal ribosomal protein uS10 family. Part of the 30S ribosomal subunit.

Involved in the binding of tRNA to the ribosomes. This chain is Small ribosomal subunit protein uS10, found in Deinococcus geothermalis (strain DSM 11300 / CIP 105573 / AG-3a).